The chain runs to 239 residues: Outer membrane protein PagN (239 aa).

Positions 1 to 22 (MKNFFAVCIIPLVVAWSATASA) are cleaved as a signal peptide. The Periplasmic portion of the chain corresponds to 23–26 (KEGI). The beta stranded transmembrane segment at 27 to 36 (YITGKAGTSV) threads the bilayer. The Extracellular portion of the chain corresponds to 37-65 (VNVYGINSTFSQDEIVNGHATLPDRTKGV). Residues 66-76 (FGGGVAIGYDF) traverse the membrane as a beta stranded segment. The Periplasmic segment spans residues 77 to 81 (YDPFQ). A beta stranded transmembrane segment spans residues 82–92 (LPVRLELDTTF). Residues 93 to 120 (RGETDAKGGQDIIAFGDPVHINVKNQVR) lie on the Extracellular side of the membrane. The beta stranded transmembrane segment at 121–132 (MTTYMVNGYYDF) threads the bilayer. Topologically, residues 133–137 (HNSTA) are periplasmic. A beta stranded transmembrane segment spans residues 138–148 (FTPYISAGVGL). The Extracellular portion of the chain corresponds to 149-174 (AHVKLSNNTIPVGFGINETLSASKNN). The chain crosses the membrane as a beta stranded span at residues 175 to 185 (FAWGAGIGAKY). Over 186–190 (AVTDN) the chain is Periplasmic. The beta stranded transmembrane segment at 191–200 (IMIDASYKYI) threads the bilayer. The Extracellular portion of the chain corresponds to 201–230 (NAGKVSISKNHYAGDEHTAYDADTKAASND). Residues 231 to 239 (FMLGITYAF) form a beta stranded membrane-spanning segment.

It is found in the cell outer membrane. In terms of biological role, haemagglutinin that facilitates the adhesion to and invasion of epithelial mammalian cells. Utilizes heparinated proteoglycan as a receptor to successfully invade host cells. The chain is Outer membrane protein PagN (pagN) from Salmonella typhimurium (strain LT2 / SGSC1412 / ATCC 700720).